The chain runs to 166 residues: Transcriptional repressor NrdR (166 aa).

Residues 3-34 (CIKCGNMEDKVIDSRPIKEGKSIRRRRECLRC) fold into a zinc finger. The 91-residue stretch at 49-139 (LFVKKRNGSI…VYCKFHDAKD (91 aa)) folds into the ATP-cone domain.

The protein belongs to the NrdR family. The cofactor is Zn(2+).

Negatively regulates transcription of bacterial ribonucleotide reductase nrd genes and operons by binding to NrdR-boxes. The protein is Transcriptional repressor NrdR of Methylacidiphilum infernorum (isolate V4) (Methylokorus infernorum (strain V4)).